Reading from the N-terminus, the 269-residue chain is ParA family protein MG470 (269 aa).

It belongs to the ParA family.

This chain is ParA family protein MG470, found in Mycoplasma genitalium (strain ATCC 33530 / DSM 19775 / NCTC 10195 / G37) (Mycoplasmoides genitalium).